A 58-amino-acid chain; its full sequence is Small ribosomal subunit protein bS21 (58 aa).

The protein belongs to the bacterial ribosomal protein bS21 family.

This is Small ribosomal subunit protein bS21 from Lactobacillus johnsonii (strain CNCM I-12250 / La1 / NCC 533).